Here is a 1195-residue protein sequence, read N- to C-terminus: Protein PIP82 (1195 aa).

A compositionally biased stretch (low complexity) spans 1–10 (MSHQEQQFQH). Disordered stretches follow at residues 1–55 (MSHQ…IGSS), 85–132 (KLRG…SQQF), 291–471 (NTFD…TANL), 493–515 (KVAKEPEELETKAEGSATGGASG), 544–567 (QRNANNQNATTSKQPKPNTVGHEP), 613–637 (EEDNEEDHSQDQTKRGQSSVSGIAT), 702–771 (MSPV…IVPK), 833–977 (SAGS…VKTS), and 1060–1195 (QITV…VVEI). Residues 11–26 (YPHHQHHHHHHHHHIH) show a composition bias toward basic residues. Over residues 37-50 (RSSDLEPNRSRNTD) the composition is skewed to basic and acidic residues. A compositionally biased stretch (low complexity) spans 109–118 (GSAKDGAGAA). The span at 119–132 (QQTHLQVAGQSQQF) shows a compositional bias: polar residues. A compositionally biased stretch (basic and acidic residues) spans 300–313 (HEQFERGKISHETD). Low complexity predominate over residues 351–360 (QQAAAEESPQ). The segment covering 361 to 371 (ANPPPPPPPRP) has biased composition (pro residues). The interval 400–450 (ETTKTAENADENNASRKLSIRQNIKRLRKSIKRPSKIKSKAAAPVPDSDEE) is phospho-regulated basic and hydrophobic (PRBH) motif. Over residues 422–438 (NIKRLRKSIKRPSKIKS) the composition is skewed to basic residues. Basic and acidic residues predominate over residues 494-505 (VAKEPEELETKA). Polar residues predominate over residues 545–560 (RNANNQNATTSKQPKP). Composition is skewed to polar residues over residues 732 to 742 (SGPQKSMSYSP) and 856 to 867 (RVQSPQIGNSRE). The span at 872 to 891 (QEEEDKEAERDSEEEEEERD) shows a compositional bias: acidic residues. 2 stretches are compositionally biased toward pro residues: residues 898–910 (SESPPPPPLPQRR) and 925–939 (VPPPLPVSKPPPPPS). Positions 940–968 (VETIPSVASLPSPAPVTRSMAQRSASMSR) are enriched in low complexity. Polar residues predominate over residues 1075-1085 (QSDQSDQSAHQ). A compositionally biased stretch (basic and acidic residues) spans 1086-1095 (EITDTRKTKS). Over residues 1102–1111 (RQNSNCSRSE) the composition is skewed to polar residues. 2 stretches are compositionally biased toward low complexity: residues 1114–1149 (SPLSFPSSRRSSTPTNLNANSNSNPNPSTNPNQNPS) and 1179–1195 (SYYSISPSGSSRYVVEI).

Phosphorylated by aPKC which lowers lipid affinity and promotes dissociation from the cell cortex. In the photoreceptor cells, aPKC-mediated phosphorylation leads to its displacement from the stalk apical cortex and thus restricts its localization to the rhabdomeric apical cortex where it functions. Dephosphorylation appears to be light-dependent. As to expression, restricted to photoreceptor cells (at protein level). Not detected until approximately 48hrs after puparium formation (APF) and then maintained in the photoreceptor cells post-eclosion (at protein level).

Its subcellular location is the cytoplasm. It is found in the cell cortex. It localises to the cytosol. The protein resides in the cell projection. The protein localises to the rhabdomere. In terms of biological role, required for the morphological differentiation and maintenance of the rhabdomeric photoreceptor apical domain. Acts as a downstream component of the gl and Pph13 transcriptional pathway which is required for photoreceptor cell development. Likely to function by regulating the trafficking or retention of rhabdomeric proteins including the phototransduction proteins ninaE and didum. The polypeptide is Protein PIP82 (Drosophila melanogaster (Fruit fly)).